Here is a 736-residue protein sequence, read N- to C-terminus: Elongation factor 2 (736 aa).

Positions 19–262 constitute a tr-type G domain; that stretch reads DQIRNIGIIA…MVIKFVPNPR (244 aa). Residues 28–35, 94–98, and 148–151 contribute to the GTP site; these read AHVDHGKT, DTPGH, and NKVD. His602 is subject to Diphthamide.

This sequence belongs to the TRAFAC class translation factor GTPase superfamily. Classic translation factor GTPase family. EF-G/EF-2 subfamily.

It is found in the cytoplasm. In terms of biological role, catalyzes the GTP-dependent ribosomal translocation step during translation elongation. During this step, the ribosome changes from the pre-translocational (PRE) to the post-translocational (POST) state as the newly formed A-site-bound peptidyl-tRNA and P-site-bound deacylated tRNA move to the P and E sites, respectively. Catalyzes the coordinated movement of the two tRNA molecules, the mRNA and conformational changes in the ribosome. This is Elongation factor 2 (fusA) from Aeropyrum pernix (strain ATCC 700893 / DSM 11879 / JCM 9820 / NBRC 100138 / K1).